The sequence spans 327 residues: MAMTTDVKDELSRLVVKSVSARRAEVTSLLRFAGGLHIVGGRVVVEAELDLGSIARRLRKEIFELYGYTAVVHVLSASGIRKSTRYVLRVANDGEALARQTGLLDMRGRPVRGLPAQVVGGSIDDAEAAWRGAFLAHGSLTEPGRSSALEVSCPGPEAALALVGAARRLGVGAKAREVRGADRVVVRDGEAIGALLTRMGAQDTRLVWEERRLRREVRATANRLANFDDANLRRSARAAVAAAARVERALEILGDTVPEHLASAGKLRVEHRQASLEELGRLADPPMTKDAVAGRIRRLLSMADRKAKVDGIPDTESVVTPDLLEDA.

Positions 275–308 (SLEELGRLADPPMTKDAVAGRIRRLLSMADRKAK) form a DNA-binding region, H-T-H motif.

This sequence belongs to the WhiA family.

Its function is as follows. Involved in cell division and chromosome segregation. This is Probable cell division protein WhiA from Mycobacterium bovis (strain ATCC BAA-935 / AF2122/97).